The following is a 547-amino-acid chain: Glucose-6-phosphate isomerase (547 aa).

E356 (proton donor) is an active-site residue. Catalysis depends on residues H387 and K508.

This sequence belongs to the GPI family.

It is found in the cytoplasm. It carries out the reaction alpha-D-glucose 6-phosphate = beta-D-fructose 6-phosphate. The protein operates within carbohydrate biosynthesis; gluconeogenesis. It participates in carbohydrate degradation; glycolysis; D-glyceraldehyde 3-phosphate and glycerone phosphate from D-glucose: step 2/4. Functionally, catalyzes the reversible isomerization of glucose-6-phosphate to fructose-6-phosphate. The chain is Glucose-6-phosphate isomerase from Cupriavidus taiwanensis (strain DSM 17343 / BCRC 17206 / CCUG 44338 / CIP 107171 / LMG 19424 / R1) (Ralstonia taiwanensis (strain LMG 19424)).